The chain runs to 440 residues: Ribulose bisphosphate carboxylase large chain (440 aa).

Lys-4 is modified (N6,N6,N6-trimethyllysine). Residues Asn-113 and Thr-163 each contribute to the substrate site. Residue Lys-165 is the Proton acceptor of the active site. Lys-167 is a substrate binding site. Mg(2+)-binding residues include Lys-191, Asp-193, and Glu-194. Position 191 is an N6-carboxylysine (Lys-191). His-284 functions as the Proton acceptor in the catalytic mechanism. Substrate is bound by residues Arg-285, His-317, and Ser-369.

It belongs to the RuBisCO large chain family. Type I subfamily. In terms of assembly, heterohexadecamer of 8 large chains and 8 small chains; disulfide-linked. The disulfide link is formed within the large subunit homodimers. Mg(2+) serves as cofactor. The disulfide bond which can form in the large chain dimeric partners within the hexadecamer appears to be associated with oxidative stress and protein turnover.

The protein localises to the plastid. The protein resides in the chloroplast. It catalyses the reaction 2 (2R)-3-phosphoglycerate + 2 H(+) = D-ribulose 1,5-bisphosphate + CO2 + H2O. The catalysed reaction is D-ribulose 1,5-bisphosphate + O2 = 2-phosphoglycolate + (2R)-3-phosphoglycerate + 2 H(+). Its function is as follows. RuBisCO catalyzes two reactions: the carboxylation of D-ribulose 1,5-bisphosphate, the primary event in carbon dioxide fixation, as well as the oxidative fragmentation of the pentose substrate in the photorespiration process. Both reactions occur simultaneously and in competition at the same active site. This chain is Ribulose bisphosphate carboxylase large chain, found in Pteris vittata (Chinese ladder brake).